Reading from the N-terminus, the 195-residue chain is Putative NADH dehydrogenase/NAD(P)H nitroreductase CC_0061 (195 aa).

Belongs to the nitroreductase family. HadB/RutE subfamily. It depends on FMN as a cofactor.

The sequence is that of Putative NADH dehydrogenase/NAD(P)H nitroreductase CC_0061 from Caulobacter vibrioides (strain ATCC 19089 / CIP 103742 / CB 15) (Caulobacter crescentus).